Here is a 152-residue protein sequence, read N- to C-terminus: Deoxyuridine 5'-triphosphate nucleotidohydrolase (152 aa).

Residues 71 to 73 (RSG), N84, 88 to 90 (LID), and M98 contribute to the substrate site.

The protein belongs to the dUTPase family. Mg(2+) is required as a cofactor.

It carries out the reaction dUTP + H2O = dUMP + diphosphate + H(+). It functions in the pathway pyrimidine metabolism; dUMP biosynthesis; dUMP from dCTP (dUTP route): step 2/2. In terms of biological role, this enzyme is involved in nucleotide metabolism: it produces dUMP, the immediate precursor of thymidine nucleotides and it decreases the intracellular concentration of dUTP so that uracil cannot be incorporated into DNA. This Serratia proteamaculans (strain 568) protein is Deoxyuridine 5'-triphosphate nucleotidohydrolase.